A 173-amino-acid chain; its full sequence is MIEFLRRIAAHRLAWSLLAASALFLELSALFFQHVLGLHPCVMCVYERIATLGVLTAGLLGMVAPQKWYVRWSALLLWGSSAFWGLKLALKHVDYQVNPSPFNVCEGFVDFPSWAPLDQWIPWMFYPDGDCSEVTWQFLSFSMPQWLVAIFAVYLLVFVVVAIGNLVKGRCCS.

The Cytoplasmic portion of the chain corresponds to 1–14; that stretch reads MIEFLRRIAAHRLA. A helical transmembrane segment spans residues 15-31; sequence WSLLAASALFLELSALF. Residues 32–49 lie on the Periplasmic side of the membrane; the sequence is FQHVLGLHPCVMCVYERI. Cys41 and Cys44 are disulfide-bonded. A helical transmembrane segment spans residues 50-65; that stretch reads ATLGVLTAGLLGMVAP. The Cytoplasmic portion of the chain corresponds to 66–72; the sequence is QKWYVRW. Residues 73–90 form a helical membrane-spanning segment; the sequence is SALLLWGSSAFWGLKLAL. The Periplasmic portion of the chain corresponds to 91–145; it reads KHVDYQVNPSPFNVCEGFVDFPSWAPLDQWIPWMFYPDGDCSEVTWQFLSFSMPQ. Residues Cys105 and Cys131 are joined by a disulfide bond. A helical membrane pass occupies residues 146–164; it reads WLVAIFAVYLLVFVVVAIG. The Cytoplasmic portion of the chain corresponds to 165-173; sequence NLVKGRCCS.

This sequence belongs to the DsbB family.

It localises to the cell inner membrane. In terms of biological role, required for disulfide bond formation in some periplasmic proteins. Acts by oxidizing the DsbA protein. The polypeptide is Disulfide bond formation protein B (Aeromonas hydrophila subsp. hydrophila (strain ATCC 7966 / DSM 30187 / BCRC 13018 / CCUG 14551 / JCM 1027 / KCTC 2358 / NCIMB 9240 / NCTC 8049)).